A 582-amino-acid chain; its full sequence is Peptidyl-prolyl cis-trans isomerase FKBP10 (582 aa).

An N-terminal signal peptide occupies residues 1–26 (MFPAGPPSHSLLRLPLLQLLLLVVQA). PPIase FKBP-type domains lie at 62-150 (GDFV…LDVW), 174-262 (GDFV…IDVH), and 286-374 (GDFM…IDFH). N-linked (GlcNAc...) asparagine glycans are attached at residues Asn70, Asn182, Asn294, Asn310, Asn352, Asn393, and Asn407. The PPIase FKBP-type 4 domain maps to 399 to 486 (GDFVRYHYNC…LFEVELVSRE (88 aa)). 2 consecutive EF-hand domains span residues 497–532 (WHKDPPANLFEDMDLNKDGEVPPEEFSTFIKAQVSE) and 542–577 (DPEKTIGDMFQNQDRNQDGKITVDELKLKSDEDEER). Ca(2+) is bound by residues Asp510, Asn512, Asp514, Glu516, Glu521, Asp555, Asn557, Asp559, Lys561, and Glu566. Positions 533 to 582 (GKGRLMPGQDPEKTIGDMFQNQDRNQDGKITVDELKLKSDEDEERVHEEL) are disordered. A compositionally biased stretch (basic and acidic residues) spans 556-582 (RNQDGKITVDELKLKSDEDEERVHEEL). Residues 579 to 582 (HEEL) carry the Prevents secretion from ER motif.

Glycosylated and phosphorylated.

It localises to the endoplasmic reticulum lumen. The catalysed reaction is [protein]-peptidylproline (omega=180) = [protein]-peptidylproline (omega=0). Its activity is regulated as follows. Inhibited by both FK506 and rapamycin, but not by cyclosporin A. Its function is as follows. PPIases accelerate the folding of proteins during protein synthesis. In Homo sapiens (Human), this protein is Peptidyl-prolyl cis-trans isomerase FKBP10 (FKBP10).